Reading from the N-terminus, the 1170-residue chain is WD repeat-containing protein 35 (1170 aa).

WD repeat units lie at residues 12-51 (PNNV…DDSK), 69-108 (GHSG…WYEE), 113-152 (RNKS…IWGK), 154-193 (LKGI…IMKM), and 491-528 (GTRD…LIQK).

Component of the IFT complex A (IFT-A) complex. IFT-A complex is divided into a core subcomplex composed of IFT122:IFT140:WDR19 which is associated with TULP3 and a peripheral subcomplex composed of IFT43:WDR35:TTC21B. Interacts directy with IFT122, ITF43 and TTC21B. Interacts with IFT43. Interacts with CFAP61. As to expression, expressed at high levels in testis and at lower levels in the brain (at protein level). Also present in other tissues, including heart, uterus, spinal cord, ovary, liver, kidney, lung, pancreas and stomach.

It is found in the cytoplasm. The protein resides in the cytoskeleton. Its subcellular location is the microtubule organizing center. It localises to the centrosome. The protein localises to the cilium axoneme. It is found in the cilium basal body. Functionally, as a component of the IFT complex A (IFT-A), a complex required for retrograde ciliary transport and entry into cilia of G protein-coupled receptors (GPCRs), it is involved in ciliogenesis and ciliary protein trafficking. May promote CASP3 activation and TNF-stimulated apoptosis. The polypeptide is WD repeat-containing protein 35 (Wdr35) (Rattus norvegicus (Rat)).